An 86-amino-acid polypeptide reads, in one-letter code: uncharacterized protein (86 aa).

This is an uncharacterized protein from Haemophilus influenzae (strain ATCC 51907 / DSM 11121 / KW20 / Rd).